A 329-amino-acid chain; its full sequence is UDP-3-O-acylglucosamine N-acyltransferase (329 aa).

His-224 acts as the Proton acceptor in catalysis.

It belongs to the transferase hexapeptide repeat family. LpxD subfamily. As to quaternary structure, homotrimer.

The catalysed reaction is a UDP-3-O-[(3R)-3-hydroxyacyl]-alpha-D-glucosamine + a (3R)-hydroxyacyl-[ACP] = a UDP-2-N,3-O-bis[(3R)-3-hydroxyacyl]-alpha-D-glucosamine + holo-[ACP] + H(+). It functions in the pathway bacterial outer membrane biogenesis; LPS lipid A biosynthesis. Catalyzes the N-acylation of UDP-3-O-acylglucosamine using 3-hydroxyacyl-ACP as the acyl donor. Is involved in the biosynthesis of lipid A, a phosphorylated glycolipid that anchors the lipopolysaccharide to the outer membrane of the cell. The chain is UDP-3-O-acylglucosamine N-acyltransferase from Albidiferax ferrireducens (strain ATCC BAA-621 / DSM 15236 / T118) (Rhodoferax ferrireducens).